Consider the following 438-residue polypeptide: UDP-N-acetylglucosamine 1-carboxyvinyltransferase (438 aa).

A phosphoenolpyruvate-binding site is contributed by 35 to 36; sequence KN. UDP-N-acetyl-alpha-D-glucosamine is bound at residue arginine 105. The Proton donor role is filled by cysteine 129. A 2-(S-cysteinyl)pyruvic acid O-phosphothioketal modification is found at cysteine 129. UDP-N-acetyl-alpha-D-glucosamine-binding positions include 134–138, aspartate 321, and valine 343; that span reads RPVDL.

This sequence belongs to the EPSP synthase family. MurA subfamily.

Its subcellular location is the cytoplasm. It carries out the reaction phosphoenolpyruvate + UDP-N-acetyl-alpha-D-glucosamine = UDP-N-acetyl-3-O-(1-carboxyvinyl)-alpha-D-glucosamine + phosphate. It functions in the pathway cell wall biogenesis; peptidoglycan biosynthesis. Its function is as follows. Cell wall formation. Adds enolpyruvyl to UDP-N-acetylglucosamine. The sequence is that of UDP-N-acetylglucosamine 1-carboxyvinyltransferase from Synechocystis sp. (strain ATCC 27184 / PCC 6803 / Kazusa).